A 226-amino-acid chain; its full sequence is Urease accessory protein UreF (226 aa).

The protein belongs to the UreF family. UreD, UreF and UreG form a complex that acts as a GTP-hydrolysis-dependent molecular chaperone, activating the urease apoprotein by helping to assemble the nickel containing metallocenter of UreC. The UreE protein probably delivers the nickel.

Its subcellular location is the cytoplasm. Its function is as follows. Required for maturation of urease via the functional incorporation of the urease nickel metallocenter. In Nitrosospira multiformis (strain ATCC 25196 / NCIMB 11849 / C 71), this protein is Urease accessory protein UreF.